The sequence spans 485 residues: Alginate biosynthesis protein AlgA (485 aa).

Belongs to the mannose-6-phosphate isomerase type 2 family. As to quaternary structure, monomer. Co(2+) is required as a cofactor.

It carries out the reaction D-mannose 6-phosphate = D-fructose 6-phosphate. It catalyses the reaction alpha-D-mannose 1-phosphate + GTP + H(+) = GDP-alpha-D-mannose + diphosphate. It participates in nucleotide-sugar biosynthesis; GDP-alpha-D-mannose biosynthesis; GDP-alpha-D-mannose from alpha-D-mannose 1-phosphate (GTP route): step 1/1. The protein operates within nucleotide-sugar biosynthesis; GDP-alpha-D-mannose biosynthesis; alpha-D-mannose 1-phosphate from D-fructose 6-phosphate: step 1/2. Produces a precursor for alginate polymerization. The alginate layer provides a protective barrier against host immune defenses and antibiotics. The chain is Alginate biosynthesis protein AlgA (algA) from Pseudomonas putida (strain ATCC 47054 / DSM 6125 / CFBP 8728 / NCIMB 11950 / KT2440).